Reading from the N-terminus, the 274-residue chain is Formamidopyrimidine-DNA glycosylase (274 aa).

The Schiff-base intermediate with DNA role is filled by Pro2. Residue Glu3 is the Proton donor of the active site. The Proton donor; for beta-elimination activity role is filled by Lys58. Residues His91, Arg110, and Lys152 each contribute to the DNA site. The FPG-type zinc finger occupies 237 to 271 (KVYGRKNLPCLVCENKIETVVIAGRHSAFCPHCQP). The active-site Proton donor; for delta-elimination activity is Arg261.

The protein belongs to the FPG family. As to quaternary structure, monomer. It depends on Zn(2+) as a cofactor.

The enzyme catalyses Hydrolysis of DNA containing ring-opened 7-methylguanine residues, releasing 2,6-diamino-4-hydroxy-5-(N-methyl)formamidopyrimidine.. It carries out the reaction 2'-deoxyribonucleotide-(2'-deoxyribose 5'-phosphate)-2'-deoxyribonucleotide-DNA = a 3'-end 2'-deoxyribonucleotide-(2,3-dehydro-2,3-deoxyribose 5'-phosphate)-DNA + a 5'-end 5'-phospho-2'-deoxyribonucleoside-DNA + H(+). Functionally, involved in base excision repair of DNA damaged by oxidation or by mutagenic agents. Acts as a DNA glycosylase that recognizes and removes damaged bases. Has a preference for oxidized purines, such as 7,8-dihydro-8-oxoguanine (8-oxoG). Has AP (apurinic/apyrimidinic) lyase activity and introduces nicks in the DNA strand. Cleaves the DNA backbone by beta-delta elimination to generate a single-strand break at the site of the removed base with both 3'- and 5'-phosphates. This Legionella pneumophila subsp. pneumophila (strain Philadelphia 1 / ATCC 33152 / DSM 7513) protein is Formamidopyrimidine-DNA glycosylase.